Reading from the N-terminus, the 414-residue chain is MSLQSYDKDIYDLVNLELKRQCDHLEMIASENFTYPEVMEVMGSILTNKYAEGYPGKRYYGGCEFVDEIEQIAIDRCKELFGCEFANVQPNSGSQANQGVYGALLNPGDKILGMDLSHGGHLTHGAKVSSSGKMYESFFYGVELDGRINYDRVMDIAKIVKPKMIVCGASAYTREIEFKKFREIADAVGAILFADVAHIAGLVVAGEHQNPFPHCDVVSSTTHKTLRGPRGGIIMTNNEEYAKKINSSIFPGIQGGPLVHVIAAKAVGFKHNLSPEWKIYAKQVKANAKKLGKVLISRGFDLVSGGTDNHLILMSFLNRDFSGKDADIALGNAGITVNKNTVPGETRSPFITSGIRVGSPALTARGMKEAEFELIANKIADVLSDINNASLQEKIKGELKELAHKFIIYDKATF.

(6S)-5,6,7,8-tetrahydrofolate contacts are provided by residues Leu-116 and 120–122 (GHL). Residue Lys-224 is modified to N6-(pyridoxal phosphate)lysine. Residues Glu-240 and 348 to 350 (SPF) each bind (6S)-5,6,7,8-tetrahydrofolate.

Belongs to the SHMT family. Homodimer. The cofactor is pyridoxal 5'-phosphate.

It is found in the cytoplasm. It catalyses the reaction (6R)-5,10-methylene-5,6,7,8-tetrahydrofolate + glycine + H2O = (6S)-5,6,7,8-tetrahydrofolate + L-serine. Its pathway is one-carbon metabolism; tetrahydrofolate interconversion. It functions in the pathway amino-acid biosynthesis; glycine biosynthesis; glycine from L-serine: step 1/1. Functionally, catalyzes the reversible interconversion of serine and glycine with tetrahydrofolate (THF) serving as the one-carbon carrier. This reaction serves as the major source of one-carbon groups required for the biosynthesis of purines, thymidylate, methionine, and other important biomolecules. Also exhibits THF-independent aldolase activity toward beta-hydroxyamino acids, producing glycine and aldehydes, via a retro-aldol mechanism. The sequence is that of Serine hydroxymethyltransferase from Campylobacter concisus (strain 13826).